The primary structure comprises 1276 residues: MTLTERLREKISQAFYNHGLLCASYPIPIILFTGLCILACCYPLLKLPLPGTGPVEFSTPVKGYSPPPADSDHKQGEPSEQPEWYVGAPVAYIQQIFVKSSVSPWHRNLLAVDVFRSPLSRAFQLVEEIRNHVLRDSSGTKSLEEVCLQVTDLLPGLRKLRSLLPEHGCLLLSPGNFWQNDWERFHADPDIIGTIHQHEPKTLQTSATLKDLLFGVPGKYSGVSLYTRKRMVSYTITLVFQRYHAKFLSSLRARLMLLHPSPNCSLRAENLVHVHFKEEIGIAELIPLVTTYIILFAYIYFSTRKIDMVKSKWGLALAAVVTVLSSLLMSVGLCTLFGLTPTLNGGEIFPYLVVVIGLENVLVLTKSVVSTPVDLEVKLRIAQGLSSESWSIMKNVATELGIILIGYFTLVPAIQEFCLFAVVGLVSDFFLQMLFFTTVLSIDIRRMELADLNKRLPPESCLPSAKPVGRPARYERQLAVRPSTPHTITLQPSSFRNLRLPKRLRVIYFLARTRLAQRLIMAGTVVWIGILVYTDPAGLRTYLAAQVTEQSPLGEGSLGPMPVPSGVLPASHPDPAFSIFPPDAPKLPENQTLPGELPEHAVPAEGVQDSRAPEVTWGPEDEELWRKLSFRHWPTLFNYYNITLAKRYISLLPVIPVTLHLNPREALEGRHPQDGRTAWAPPEPLPAGLWETGPKGPGGTQTHGDITLYKVAALGLAAGIVLVLLLLCLYRVLCPRNYGQPGGGAGRRRRGELPCDDYGYAPPETEIVPLVLRGHLMDIECLASDGMLLVSCCLAGQVCVWDAQTGDCLTRIPRPGPRRDSCGGGAFEAQENWERLSDGGKASPEEPGDSPPLRRRPRGPPPPSLFGDQPDLTCLIDTNFSVQLPPEPTQPEPRHRAGCGRSRDSGYDFSRLVQRVYQEEGLAAVHMSALRPPSPGPPLPQASQEEGTAPEKGSPPLAWAPSTAGSIWSLELQGSLIVVGRSSGRLEVWDAIEGVLCCSNEEISSGITALVFLDRRIVAARLNGSLDFFSLETHTSLSPLQFRGTPGRGSSPSSPVYSSSNTVACHLTHTVPCAHQKPITALRAAAGRLVTGSQDHTLRVFRLEDSCCLFTLQGHSGAITTVYIDQTMVLASGGQDGAICLWDVLTGSRVSHTFAHRGDVTSLTCTTSCVISSGLDDFINIWDRSTGIKLYSIQQDLGCGASLGVISDNLLVTGGQGCVSFWDLNYGDLLQTVYLGKNSEAQPARQILVLDNAAIVCNFGSELSLVYVPSVLEKLD.

The Cytoplasmic portion of the chain corresponds to 1-18 (MTLTERLREKISQAFYNH). The chain crosses the membrane as a helical span at residues 19-39 (GLLCASYPIPIILFTGLCILA). The Lumenal portion of the chain corresponds to 40–279 (CCYPLLKLPL…NLVHVHFKEE (240 aa)). The interval 46-284 (KLPLPGTGPV…HFKEEIGIAE (239 aa)) is loop-1. The disordered stretch occupies residues 60-81 (PVKGYSPPPADSDHKQGEPSEQ). N263 is a glycosylation site (N-linked (GlcNAc...) asparagine). The chain crosses the membrane as a helical span at residues 280–300 (IGIAELIPLVTTYIILFAYIY). The region spanning 284–442 (ELIPLVTTYI…MLFFTTVLSI (159 aa)) is the SSD domain. Residues 301 to 312 (FSTRKIDMVKSK) lie on the Cytoplasmic side of the membrane. The helical transmembrane segment at 313-333 (WGLALAAVVTVLSSLLMSVGL) threads the bilayer. Residues 334-344 (CTLFGLTPTLN) lie on the Lumenal side of the membrane. The helical transmembrane segment at 345–365 (GGEIFPYLVVVIGLENVLVLT) threads the bilayer. Residues 366 to 401 (KSVVSTPVDLEVKLRIAQGLSSESWSIMKNVATELG) lie on the Cytoplasmic side of the membrane. The chain crosses the membrane as a helical span at residues 402–422 (IILIGYFTLVPAIQEFCLFAV). Residue V423 is a topological domain, lumenal. A helical transmembrane segment spans residues 424–444 (GLVSDFFLQMLFFTTVLSIDI). Topologically, residues 445–518 (RRMELADLNK…FLARTRLAQR (74 aa)) are cytoplasmic. An ER export signal motif is present at residues 447–452 (MELADL). Glycyl lysine isopeptide (Lys-Gly) (interchain with G-Cter in ubiquitin) cross-links involve residues K454 and K466. The chain crosses the membrane as a helical span at residues 519-539 (LIMAGTVVWIGILVYTDPAGL). The segment at 535 to 710 (DPAGLRTYLA…QTHGDITLYK (176 aa)) is loop-7. The Lumenal portion of the chain corresponds to 540–707 (RTYLAAQVTE…GGTQTHGDIT (168 aa)). N590 and N641 each carry an N-linked (GlcNAc...) asparagine glycan. A helical membrane pass occupies residues 708–728 (LYKVAALGLAAGIVLVLLLLC). Over 729–1276 (LYRVLCPRNY…YVPSVLEKLD (548 aa)) the chain is Cytoplasmic. Positions 731-1276 (RVLCPRNYGQ…YVPSVLEKLD (546 aa)) are interaction with SREBF2. A WD 1 repeat occupies 771–811 (VLRGHLMDIECLASDGMLLVSCCLAGQVCVWDAQTGDCLTR). A phosphoserine mark is found at S821, S837, S843, S850, S905, and S934. The tract at residues 834–903 (ERLSDGGKAS…RHRAGCGRSR (70 aa)) is disordered. A disordered region spans residues 928 to 958 (SALRPPSPGPPLPQASQEEGTAPEKGSPPLA). WD repeat units lie at residues 949 to 999 (APEK…LCCS) and 1002 to 1039 (EISS…SLSP). Residue R1048 is modified to Omega-N-methylarginine. 4 WD repeats span residues 1074–1111 (AHQK…CLFT), 1114–1152 (GHSG…RVSH), 1155–1192 (AHRG…KLYS), and 1194–1232 (QQDL…LLQT).

It belongs to the WD repeat SCAP family. In terms of assembly, membrane region forms a homotetramer. Component of the SCAP-SREBP complex (composed of SCAP and SREBF1/SREBP1 or SREBF2/SREBP2); interacts with SREBF1/SREBP1 or SREBF2/SREBP2 through its C-terminal cytoplasmic domain. Forms a ternary complex with INSIG1 or INSIG2 through its transmembrane domains at high sterol concentrations. Interacts with PAQR3; the interaction anchors the SCAP-SREBP complex to the Golgi apparatus in low cholesterol conditions. Interacts with the SEC23-SEC24 complex in a SAR1-GTP-dependent manner through an ER export signal in its third cytoplasmic loop. Interacts with RNF139; the interaction inhibits the interaction of SCAP with SEC24B and hampering the ER to Golgi transport of the SCAP-SREBP complex. Interacts with SPRING1. Post-translationally, ubiquitinated at Lys-454 and Lys-466. RNF145 triggers ubiquitination of SCAP, likely inhibiting SCAP-SREBP complex transport to the Golgi apparatus and the subsequent processing/maturation of SREBF2/SREBP2.

The protein resides in the endoplasmic reticulum membrane. It is found in the golgi apparatus membrane. The protein localises to the cytoplasmic vesicle. Its subcellular location is the COPII-coated vesicle membrane. Its function is as follows. Escort protein required for cholesterol as well as lipid homeostasis. Regulates export of the SCAP-SREBP complex from the endoplasmic reticulum to the Golgi upon low cholesterol, thereby regulating the processing of sterol regulatory element-binding proteins (SREBPs) SREBF1/SREBP1 and SREBF2/SREBP2. At high sterol concentrations, formation of a ternary complex with INSIG (INSIG1 or INSIG2) leads to mask the ER export signal in SCAP, promoting retention of the complex in the endoplasmic reticulum. Low sterol concentrations trigger release of INSIG, a conformational change in the SSD domain of SCAP, unmasking of the ER export signal, promoting recruitment into COPII-coated vesicles and transport of the SCAP-SREBP to the Golgi: in the Golgi, SREBPs are then processed, releasing the transcription factor fragment of SREBPs from the membrane, its import into the nucleus and up-regulation of LDLR, INSIG1 and the mevalonate pathway. Binds cholesterol via its SSD domain. This chain is Sterol regulatory element-binding protein cleavage-activating protein, found in Rattus norvegicus (Rat).